A 1085-amino-acid chain; its full sequence is MFTPQRNRWPETDRKGKAIAFSDEIITPPPQRVLLREDDDWQKFKEVGLLDEASLERKDRDALIEKILKLEKELFDYQHNMGLLLIEKKQWTSTNNELQQAYDEAMEMLKREKTSNAITLNEADKREENLRKALIDEKQFVAELENDLKYWQREHSVVKSTSEAKLEEANALVIGMKEKALEVDRERAIAEEKFSVMNRKSSELERKLKEVETREKVHQREHLSLVTEREAHEAVFYKQREDLQEWEKKLTLEEDRLSEVKRSINHREERVMENERTIEKKEKILENLQQKISVAKSELTEKEESIKIKLNDISLKEKDFEAMKAKVDIKEKELHEFEENLIEREQMEIGKLLDDQKAVLDSRRREFEMELEQMRRSLDEELEGKKAEIEQLQVEISHKEEKLAKREAALEKKEEGVKKKEKDLDARLKTVKEKEKALKAEEKKLHMENERLLEDKECLRKLKDEIEEIGTETTKQESRIREEHESLRITKEERVEFLRLQSELKQQIDKVKQEEELLLKEREELKQDKERFEKEWEALDKKRANITREQNEVAEENEKLRNLQISEKHRLKREEMTSRDNLKRELDGVKMQKESFEADMEDLEMQKRNLDMEFQRQEEAGERDFNERARTYEKRSQEELDNINYTKKLAQREMEEMQYEKLALEREREQISVRKKLLKEQEAEMHKDITELDVLRSSLKEKRKEFICERERFLVFLEKLKSCSSCGEITENFVLSDLRLPDVEDGDKRFGKQKLKAEEALNISPSAENSKRTSLLGKIASKLLSISPIGKTDKVTDLGITVKLPESSQPDDSLDRVSGEDHEPSATEQSFTDSRIQEGPEGSLQSEMKSDKPRRGRGRGRGRGKSVRGRSQATKAVSRDSKPSDGETPRKRQREQTSRITESEQAAGDSDEGVDSITTGGRRKKRQIAVPVSQTPGQTRYQLRRHRNVGTEEDKAQASKGATEKQERVNDDIRKVPSPKETRTPPEGENRENGKAEVLVETVTHEEIVTVETETVFKVNNTGKNPVEDPQLEVGGSGEIREHGEEDDENISMIEEENEGEEEEETERQGNDASIGKKIWVFFTT.

Coiled coils occupy residues 51–149 (DEAS…NDLK) and 185–695 (RERA…LDVL). A Glycyl lysine isopeptide (Lys-Gly) (interchain with G-Cter in ubiquitin) cross-link involves residue lysine 318. Positions 404 to 411 (AKREAALE) match the Nuclear localization signal motif. Lysine 661 is covalently cross-linked (Glycyl lysine isopeptide (Lys-Gly) (interchain with G-Cter in ubiquitin)). 4 positions are modified to phosphoserine: serine 764, serine 787, serine 825, and serine 843. Disordered regions lie at residues 801-997 (TVKL…GKAE) and 1020-1077 (NNTG…SIGK). Residues 813 to 825 (SLDRVSGEDHEPS) are compositionally biased toward basic and acidic residues. Residues 854–868 (RRGRGRGRGRGKSVR) are compositionally biased toward basic residues. The span at 877 to 897 (VSRDSKPSDGETPRKRQREQT) shows a compositional bias: basic and acidic residues. Serine 910 bears the Phosphoserine mark. Residues 932-941 (VSQTPGQTRY) are compositionally biased toward polar residues. Residues 949–995 (VGTEEDKAQASKGATEKQERVNDDIRKVPSPKETRTPPEGENRENGK) are compositionally biased toward basic and acidic residues. Positions 1045–1066 (EEDDENISMIEEENEGEEEEET) are enriched in acidic residues.

The protein belongs to the CRWN family. As to quaternary structure, core component of the LINC complex which is composed of inner nuclear membrane SUN domain-containing proteins coupled to outer nuclear membrane WIP proteins, the nucleoskeletal CRWN/LINC proteins, and, possibly, KAKU4. In terms of tissue distribution, expressed at low levels in roots, leaves, flowers and flower stalks.

Its subcellular location is the nucleus membrane. The protein resides in the nucleus. The protein localises to the nucleoplasm. It is found in the cytoplasm. It localises to the nucleus lamina. Functionally, component of SUN-protein-containing multivariate complexes also called LINC complexes which link the nucleoskeleton and cytoskeleton by providing versatile outer nuclear membrane attachment sites for cytoskeletal filaments. Required for nucleus structure organization (e.g. size and shape). The chain is Protein CROWDED NUCLEI 3 from Arabidopsis thaliana (Mouse-ear cress).